The sequence spans 206 residues: Guanylate kinase (206 aa).

Positions 5 to 183 (GNLFVVAAPS…AVFDLKTIVH (179 aa)) constitute a Guanylate kinase-like domain. Residue 12 to 19 (APSGAGKS) participates in ATP binding.

This sequence belongs to the guanylate kinase family.

Its subcellular location is the cytoplasm. The enzyme catalyses GMP + ATP = GDP + ADP. In terms of biological role, essential for recycling GMP and indirectly, cGMP. The sequence is that of Guanylate kinase from Polaromonas sp. (strain JS666 / ATCC BAA-500).